Reading from the N-terminus, the 273-residue chain is MHPIQSLIEQAFENRAEITPATVSPELKAAIEQVITELDNGHLRVAEKNGAEWVVNQWVKKAVLLSFRIRDNAVQDDGVNRYFDKVDTKFADWSQARFQEAGFRVVPGAVARKGSFIAKNTVLMPSYVNIGAYVDEGTMVDTWATVGSCAQIGKNVHLSGGVGIGGVLEPLQANPTIIEDNCFIGARSEIVEGVIVGEGSVISMGVYIGQSTKIYDRETGEVMYGRVPPGSVVVSGNLPSKDGSHSLYCAVIVKKVDAQTRSKTSINELLRGV.

Substrate is bound by residues R104 and D141.

The protein belongs to the transferase hexapeptide repeat family. In terms of assembly, homotrimer.

The protein resides in the cytoplasm. The enzyme catalyses (S)-2,3,4,5-tetrahydrodipicolinate + succinyl-CoA + H2O = (S)-2-succinylamino-6-oxoheptanedioate + CoA. It functions in the pathway amino-acid biosynthesis; L-lysine biosynthesis via DAP pathway; LL-2,6-diaminopimelate from (S)-tetrahydrodipicolinate (succinylase route): step 1/3. The protein is 2,3,4,5-tetrahydropyridine-2,6-dicarboxylate N-succinyltransferase of Chromobacterium violaceum (strain ATCC 12472 / DSM 30191 / JCM 1249 / CCUG 213 / NBRC 12614 / NCIMB 9131 / NCTC 9757 / MK).